Here is a 1101-residue protein sequence, read N- to C-terminus: Type VI secretion system component TssM1 (1101 aa).

The chain crosses the membrane as a helical span at residues 371–391 (LTIGALSATALVVLAVTAVWI).

It localises to the cell inner membrane. Functionally, core component of the type VI (T6SS) secretion system that plays a role in the release of toxins targeting both eukaryotic and prokaryotic species. Plays an essential role in stabilization of assembled TssK1 structure at a fixed perimembrane site. The chain is Type VI secretion system component TssM1 from Pseudomonas aeruginosa (strain ATCC 15692 / DSM 22644 / CIP 104116 / JCM 14847 / LMG 12228 / 1C / PRS 101 / PAO1).